We begin with the raw amino-acid sequence, 301 residues long: MPGISSPILTNAQGQVIGALPWVVNSASVATPAPAQSLQVQAVTPQLLLNAQGQVIATLASSPLPQPVAVRKPSTPESPAKSEVQPIQPTQAVPPPAVILTSPAPALKPSASAPIPITCSETPTVSQLVSKPHTPSLDEDGINLEEIREFAKNFKIRRLSLGLTQTQVGQALTATEGPAYSQSAICRFEKLDITPKSAQKLKPVLEKWLNEAELRNQEGQQNLMEFVGGEPSKKRKRRTSFTPQAIEALNAYFEKNPLPTGQEITEIAKELNYDREVVRVWFCNRRQTLKNTSKLNVFQIP.

2 consecutive repeat copies span residues 11–17 and 50–56. A 2 X 7 AA repeats of N-A-Q-G-Q-V-I region spans residues 11–56; the sequence is NAQGQVIGALPWVVNSASVATPAPAQSLQVQAVTPQLLLNAQGQVI. The disordered stretch occupies residues 66–88; sequence QPVAVRKPSTPESPAKSEVQPIQ. The POU-specific domain maps to 139-213; sequence EDGINLEEIR…VLEKWLNEAE (75 aa). The homeobox DNA-binding region spans 234–293; it reads KRKRRTSFTPQAIEALNAYFEKNPLPTGQEITEIAKELNYDREVVRVWFCNRRQTLKNTS.

This sequence belongs to the POU transcription factor family. Class-6 subfamily. In terms of tissue distribution, in the embryo, widely expressed, with highest levels in the developing brain and spinal cord. In the adult, mostly found in the brain, where it is diffusely expressed with the exception of an enrichment in layer IV of the neocortex. Also found in kidney, lung, heart, adrenal, skin, and placenta. Low levels in spleen, muscle, liver, anterior pituitary, testis and ovary.

It localises to the nucleus. Its function is as follows. Transcription factor that binds preferentially to a variant of the octamer motif (5'-ATGATAAT-3'). This chain is POU domain, class 6, transcription factor 1 (Pou6f1), found in Rattus norvegicus (Rat).